Here is a 134-residue protein sequence, read N- to C-terminus: Photosystem II lipoprotein Psb27 (134 aa).

The signal sequence occupies residues Met1 to Ala24. Residue Cys25 is the site of N-palmitoyl cysteine attachment. Cys25 is lipidated: S-diacylglycerol cysteine.

It belongs to the Psb27 family. As to quaternary structure, monomer. Forms a complex with a monomeric, partially assembled PSII. This is probably the complex in which D1 is assembled and/or replaced. Present in 6-10% of PSII complexes; mostly in monomeric PSII. These PSII do not evolve oxygen, do not have an assembled calcium-manganese-oxide cluster. Psb27-containing PSII seem to be assembly intermediates; a wild-type strain includes the intrinsic membrane proteins, Psb27, Pbs28, substoichiometric amounts of PsbO and PsbQ but no PsbU or PsbV, while a ctpA deletion mutant includes the intrinsic membrane proteins (D1 as precursor), Psb27, a very low amount of PsbO and PsbQ, but no PsbU or PsbV. Small amounts of Psb27 interact with the lumenal domain of CP43 (psbC) in wild-type and a ctpA mutant. A small amount can also be detected in monomeric and trimeric photosystem I (PSI), possibly via association with PsaB.

It localises to the cellular thylakoid membrane. Its function is as follows. Plays a role in the repair and/or biogenesis of the calcium-manganese-oxide cluster on the lumenal face of the thylakoid membrane. Photosystem II (PSII) complexes containing this protein are monomeric, are assembly intermediates lacking the calcium-manganese-oxide cluster and miss some of the lumenal subunits. Probably blocks binding of some of the small lumenal subunits. The protein is Photosystem II lipoprotein Psb27 of Synechocystis sp. (strain ATCC 27184 / PCC 6803 / Kazusa).